Consider the following 397-residue polypeptide: Phosphoglycerate kinase (397 aa).

Residues 21 to 23, arginine 37, 60 to 63, arginine 119, and arginine 152 contribute to the substrate site; these read DFN and HLGR. Residues lysine 203, glycine 294, glutamate 325, and 354–357 each bind ATP; that span reads GGDS.

It belongs to the phosphoglycerate kinase family. Monomer.

Its subcellular location is the cytoplasm. The catalysed reaction is (2R)-3-phosphoglycerate + ATP = (2R)-3-phospho-glyceroyl phosphate + ADP. The protein operates within carbohydrate degradation; glycolysis; pyruvate from D-glyceraldehyde 3-phosphate: step 2/5. This Chlorobaculum tepidum (strain ATCC 49652 / DSM 12025 / NBRC 103806 / TLS) (Chlorobium tepidum) protein is Phosphoglycerate kinase.